Reading from the N-terminus, the 204-residue chain is uncharacterized protein (204 aa).

An N-terminal signal peptide occupies residues 1–21 (MIKKFLLFAMLNIFLTNKAHS).

This is an uncharacterized protein from Borreliella burgdorferi (strain ATCC 35210 / DSM 4680 / CIP 102532 / B31) (Borrelia burgdorferi).